The sequence spans 408 residues: Protein SLX4IP (408 aa).

Glycyl lysine isopeptide (Lys-Gly) (interchain with G-Cter in SUMO2) cross-links involve residues K61 and K79. S130 carries the post-translational modification Phosphoserine. Glycyl lysine isopeptide (Lys-Gly) (interchain with G-Cter in SUMO2) cross-links involve residues K167 and K176. Residues 173 to 226 are disordered; that stretch reads TETKSSVTSKSQTRRDTVETSSDSVIAEIARRRNDGQASSSPPSESMGQAKDSI. Residues 208–219 are compositionally biased toward polar residues; the sequence is GQASSSPPSESM. A Phosphoserine modification is found at S213. Residues K239 and K242 each participate in a glycyl lysine isopeptide (Lys-Gly) (interchain with G-Cter in SUMO2) cross-link. Positions 243 to 255 are enriched in polar residues; sequence VNQTQPEDTSGQQ. The tract at residues 243–313 is disordered; sequence VNQTQPEDTS…DFDHHGRVSL (71 aa). Residues K256, K291, K347, K356, and K372 each participate in a glycyl lysine isopeptide (Lys-Gly) (interchain with G-Cter in SUMO2) cross-link. The interval 365–408 is disordered; that stretch reads LSSRHLMKNNPGQAQQTGLATNTERLSTIQNSPTKKRKKYERGH. The segment covering 374–397 has biased composition (polar residues); sequence NPGQAQQTGLATNTERLSTIQNSP. T392 is modified (phosphothreonine). Residues 398–408 are compositionally biased toward basic residues; that stretch reads TKKRKKYERGH. K399 is covalently cross-linked (Glycyl lysine isopeptide (Lys-Gly) (interchain with G-Cter in SUMO2)).

This sequence belongs to the SLX4IP family. In terms of assembly, interacts with SLX4/BTBD12; subunit of different structure-specific endonucleases.

This Homo sapiens (Human) protein is Protein SLX4IP (SLX4IP).